Consider the following 144-residue polypeptide: Glycine-rich protein HC1 (144 aa).

A helical transmembrane segment spans residues 5–25 (IFLLLGLSIAFAILISSEVAA). Repeat copies occupy residues 37-42 (GYNNGG), 43-48 (GYHNGG), 50-55 (GYNNGG), 56-61 (GYHNGG), 63-68 (GYNNGG), 69-74 (GYHNGG), 76-81 (GYNNGG), 82-87 (GYHNGG), 89-94 (GYNNGG), 102-107 (GYNNGG), and 108-113 (GYHGGG). Residues 37 to 113 (GYNNGGGYHN…NNGGGYHGGG (77 aa)) are 11 X 6 AA tandem repeats of G-Y-[NH]-N-G -G.

Belongs to the GRP family.

The protein resides in the membrane. The polypeptide is Glycine-rich protein HC1 (Oxybasis rubra (Red goosefoot)).